The sequence spans 116 residues: Flagellar transcriptional regulator FlhD (116 aa).

The protein belongs to the FlhD family. In terms of assembly, homodimer; disulfide-linked. Forms a heterohexamer composed of two FlhC and four FlhD subunits. Each FlhC binds a FlhD dimer, forming a heterotrimer, and a hexamer assembles by dimerization of two heterotrimers.

Its subcellular location is the cytoplasm. Functionally, functions in complex with FlhC as a master transcriptional regulator that regulates transcription of several flagellar and non-flagellar operons by binding to their promoter region. Activates expression of class 2 flagellar genes, including fliA, which is a flagellum-specific sigma factor that turns on the class 3 genes. Also regulates genes whose products function in a variety of physiological pathways. In Xenorhabdus nematophila (Achromobacter nematophilus), this protein is Flagellar transcriptional regulator FlhD.